The sequence spans 391 residues: E3 ubiquitin-protein ligase RMND5A (391 aa).

Position 1 is an N-acetylmethionine (methionine 1). One can recognise a LisH domain in the interval 114–146 (SQRLLNEVMVEHFFRQGMLDVAEELCQESGLSV). In terms of domain architecture, CTLH spans 153–210 (PFVELNRILEALKVRVLRPALEWAVSNREMLIAQNSSLEFKLHRLYFISLLMGGTTNQ). An RING-Gid-type zinc finger spans residues 336–377 (CPILRQQTTDNNPPMKLVCGHIISRDALNKMFNGSKLKCPYC).

In terms of assembly, identified in the CTLH complex that contains GID4, RANBP9 and/or RANBP10, MKLN1, MAEA, RMND5A (or alternatively its paralog RMND5B), GID8, ARMC8, WDR26 and YPEL5. Within this complex, MAEA, RMND5A (or alternatively its paralog RMND5B), GID8, WDR26, and RANBP9 and/or RANBP10 form the catalytic core, while GID4, MKLN1, ARMC8 and YPEL5 have ancillary roles.

It is found in the nucleus. The protein resides in the nucleoplasm. Its subcellular location is the cytoplasm. The enzyme catalyses S-ubiquitinyl-[E2 ubiquitin-conjugating enzyme]-L-cysteine + [acceptor protein]-L-lysine = [E2 ubiquitin-conjugating enzyme]-L-cysteine + N(6)-ubiquitinyl-[acceptor protein]-L-lysine.. Functionally, core component of the CTLH E3 ubiquitin-protein ligase complex that selectively accepts ubiquitin from UBE2H and mediates ubiquitination and subsequent proteasomal degradation of the transcription factor HBP1. MAEA and RMND5A are both required for catalytic activity of the CTLH E3 ubiquitin-protein ligase complex. Catalytic activity of the complex is required for normal cell proliferation. The CTLH E3 ubiquitin-protein ligase complex is not required for the degradation of enzymes involved in gluconeogenesis, such as FBP1. This is E3 ubiquitin-protein ligase RMND5A (Rmnd5a) from Mus musculus (Mouse).